A 275-amino-acid polypeptide reads, in one-letter code: Putative ABC transporter permease protein ORF2 (275 aa).

6 helical membrane passes run 11 to 31 (YFIF…FMLF), 74 to 94 (IAVS…AFAF), 108 to 128 (LIIA…YVLT), 136 to 156 (TVFA…IFIL), 185 to 205 (ILLP…GTYL), and 239 to 259 (IPAI…AYIF). In terms of domain architecture, ABC transmembrane type-1 spans 69–260 (LKNSVIAVSI…LPMLIAYIFG (192 aa)).

It belongs to the binding-protein-dependent transport system permease family. MalFG subfamily.

The protein resides in the cell membrane. The sequence is that of Putative ABC transporter permease protein ORF2 from Caldicellulosiruptor sp. (strain Rt8B.4).